The primary structure comprises 329 residues: Cytosolic arginine sensor for mTORC1 subunit 2 (329 aa).

ACT domains are found at residues 72–139 and 262–322; these read ADAT…MHTL and ELWK…NALQ.

Belongs to the GATS family. May form homodimers and heterodimers.

It is found in the cytoplasm. It localises to the cytosol. Functions as a negative regulator of the TORC1 signaling pathway. The protein is Cytosolic arginine sensor for mTORC1 subunit 2 of Xenopus tropicalis (Western clawed frog).